The following is a 197-amino-acid chain: Putative AgrB-like protein (197 aa).

4 helical membrane-spanning segments follow: residues 29–49, 79–99, 102–122, and 143–163; these read FGFTIILHYLFTLLLVLAVGL, SIGCTLLSVLFITAISWVPFA, YAWILYGISGGLLIWKYAPYY, and ILIVLFIILAMLMSTQGLVLG.

This sequence belongs to the AgrB family.

Its subcellular location is the cell membrane. May be involved in the proteolytic processing of a quorum sensing system signal molecule precursor. This is Putative AgrB-like protein from Halalkalibacterium halodurans (strain ATCC BAA-125 / DSM 18197 / FERM 7344 / JCM 9153 / C-125) (Bacillus halodurans).